We begin with the raw amino-acid sequence, 147 residues long: Cyanate hydratase (147 aa).

Catalysis depends on residues Arg-88, Glu-91, and Ser-114.

It belongs to the cyanase family.

It catalyses the reaction cyanate + hydrogencarbonate + 3 H(+) = NH4(+) + 2 CO2. In terms of biological role, catalyzes the reaction of cyanate with bicarbonate to produce ammonia and carbon dioxide. The protein is Cyanate hydratase of Methylobacillus flagellatus (strain ATCC 51484 / DSM 6875 / VKM B-1610 / KT).